Here is a 494-residue protein sequence, read N- to C-terminus: Glutamate--tRNA ligase (494 aa).

The 'HIGH' region signature appears at 10 to 20; that stretch reads PSPTGDPHVGT. Residues C107, C109, C134, and H136 each contribute to the Zn(2+) site. The 'KMSKS' region signature appears at 251-255; that stretch reads KLSKR. ATP is bound at residue K254.

It belongs to the class-I aminoacyl-tRNA synthetase family. Glutamate--tRNA ligase type 1 subfamily. As to quaternary structure, monomer. Requires Zn(2+) as cofactor.

It localises to the cytoplasm. It catalyses the reaction tRNA(Glu) + L-glutamate + ATP = L-glutamyl-tRNA(Glu) + AMP + diphosphate. Functionally, catalyzes the attachment of glutamate to tRNA(Glu) in a two-step reaction: glutamate is first activated by ATP to form Glu-AMP and then transferred to the acceptor end of tRNA(Glu). This chain is Glutamate--tRNA ligase, found in Pseudomonas aeruginosa (strain ATCC 15692 / DSM 22644 / CIP 104116 / JCM 14847 / LMG 12228 / 1C / PRS 101 / PAO1).